The chain runs to 77 residues: Small ribosomal subunit protein bS21 (77 aa).

Over residues 38 to 52 the composition is skewed to basic and acidic residues; that stretch reads KPSEKRAREKAEAIR. A disordered region spans residues 38–77; that stretch reads KPSEKRAREKAEAIRRTRKLARKRAQREGIVSNGRTASVR. Residues 53-62 show a composition bias toward basic residues; the sequence is RTRKLARKRA.

Belongs to the bacterial ribosomal protein bS21 family.

The protein is Small ribosomal subunit protein bS21 of Bartonella bacilliformis (strain ATCC 35685 / KC583 / Herrer 020/F12,63).